We begin with the raw amino-acid sequence, 320 residues long: Malate dehydrogenase (320 aa).

NAD(+) contacts are provided by residues 10-15 (GAGMIG) and aspartate 34. Residues arginine 83 and arginine 89 each contribute to the substrate site. NAD(+)-binding positions include asparagine 96 and 119-121 (ITN). Residues asparagine 121 and arginine 152 each coordinate substrate. The active-site Proton acceptor is histidine 176.

This sequence belongs to the LDH/MDH superfamily. MDH type 3 family.

It carries out the reaction (S)-malate + NAD(+) = oxaloacetate + NADH + H(+). In terms of biological role, catalyzes the reversible oxidation of malate to oxaloacetate. This is Malate dehydrogenase from Caulobacter vibrioides (strain NA1000 / CB15N) (Caulobacter crescentus).